Consider the following 169-residue polypeptide: Cytochrome c oxidase subunit 4 isoform 1, mitochondrial (169 aa).

Residues 1-22 (MLATRVFSLIGRRAISTSVCVR) constitute a mitochondrion transit peptide. Over 23-98 (AHGSVVKSED…SFAEMNRSTN (76 aa)) the chain is Mitochondrial matrix. N6-acetyllysine; alternate is present on Lys-29. Position 29 is an N6-succinyllysine; alternate (Lys-29). An N6-acetyllysine modification is found at Lys-53. 2 positions are modified to phosphoserine: Ser-56 and Ser-58. Residue Lys-60 is modified to N6-acetyllysine; alternate. The residue at position 60 (Lys-60) is an N6-succinyllysine; alternate. N6-acetyllysine is present on Lys-67. Residues 99–124 (EWKTVVGAAMFFIGFTALLLIWEKHY) traverse the membrane as a helical segment. Residues 125-169 (VYGPIPHTFEEEWVAKQTKRMLDMKVAPIQGFSAKWDYDKNEWKK) are Mitochondrial intermembrane-facing.

Belongs to the cytochrome c oxidase IV family. As to quaternary structure, component of the cytochrome c oxidase (complex IV, CIV), a multisubunit enzyme composed of 14 subunits. The complex is composed of a catalytic core of 3 subunits MT-CO1, MT-CO2 and MT-CO3, encoded in the mitochondrial DNA, and 11 supernumerary subunits COX4I1 (or COX4I2), COX5A, COX5B, COX6A2 (or COX6A1), COX6B1 (or COX6B2), COX6C, COX7A1 (or COX7A2), COX7B, COX7C, COX8B and NDUFA4, which are encoded in the nuclear genome. The complex exists as a monomer or a dimer and forms supercomplexes (SCs) in the inner mitochondrial membrane with NADH-ubiquinone oxidoreductase (complex I, CI) and ubiquinol-cytochrome c oxidoreductase (cytochrome b-c1 complex, complex III, CIII), resulting in different assemblies (supercomplex SCI(1)III(2)IV(1) and megacomplex MCI(2)III(2)IV(2)). Interacts with PHB2; the interaction decreases in absence of SPHK2. Interacts with AFG1L. Interacts with ABCB7; this interaction allows the regulation of cellular iron homeostasis and cellular reactive oxygen species (ROS) levels in cardiomyocytes. Interacts with FLVCR2; this interaction occurs in the absence of heme and is disrupted upon heme binding. Interacts with IRGC.

Its subcellular location is the mitochondrion inner membrane. The protein operates within energy metabolism; oxidative phosphorylation. Functionally, component of the cytochrome c oxidase, the last enzyme in the mitochondrial electron transport chain which drives oxidative phosphorylation. The respiratory chain contains 3 multisubunit complexes succinate dehydrogenase (complex II, CII), ubiquinol-cytochrome c oxidoreductase (cytochrome b-c1 complex, complex III, CIII) and cytochrome c oxidase (complex IV, CIV), that cooperate to transfer electrons derived from NADH and succinate to molecular oxygen, creating an electrochemical gradient over the inner membrane that drives transmembrane transport and the ATP synthase. Cytochrome c oxidase is the component of the respiratory chain that catalyzes the reduction of oxygen to water. Electrons originating from reduced cytochrome c in the intermembrane space (IMS) are transferred via the dinuclear copper A center (CU(A)) of subunit 2 and heme A of subunit 1 to the active site in subunit 1, a binuclear center (BNC) formed by heme A3 and copper B (CU(B)). The BNC reduces molecular oxygen to 2 water molecules using 4 electrons from cytochrome c in the IMS and 4 protons from the mitochondrial matrix. This Bos taurus (Bovine) protein is Cytochrome c oxidase subunit 4 isoform 1, mitochondrial (COX4I1).